Reading from the N-terminus, the 446-residue chain is N-succinylarginine dihydrolase (446 aa).

Residues 19 to 28 (AGLSFGNVAS), Asn110, and 137 to 138 (HR) contribute to the substrate site. Glu174 is an active-site residue. Substrate is bound at residue Arg213. His249 is a catalytic residue. Asp251 and Asn364 together coordinate substrate. The Nucleophile role is filled by Cys370.

It belongs to the succinylarginine dihydrolase family. Homodimer.

It carries out the reaction N(2)-succinyl-L-arginine + 2 H2O + 2 H(+) = N(2)-succinyl-L-ornithine + 2 NH4(+) + CO2. The protein operates within amino-acid degradation; L-arginine degradation via AST pathway; L-glutamate and succinate from L-arginine: step 2/5. Catalyzes the hydrolysis of N(2)-succinylarginine into N(2)-succinylornithine, ammonia and CO(2). The polypeptide is N-succinylarginine dihydrolase (Burkholderia ambifaria (strain ATCC BAA-244 / DSM 16087 / CCUG 44356 / LMG 19182 / AMMD) (Burkholderia cepacia (strain AMMD))).